The sequence spans 158 residues: Low molecular weight phosphotyrosine protein phosphatase (158 aa).

Residue alanine 2 is modified to N-acetylalanine. Residue cysteine 13 is the Nucleophile of the active site. Residue arginine 19 is part of the active site. Catalysis depends on aspartate 130, which acts as the Proton donor. Phosphotyrosine occurs at positions 132 and 133.

This sequence belongs to the low molecular weight phosphotyrosine protein phosphatase family.

It is found in the cytoplasm. The catalysed reaction is O-phospho-L-tyrosyl-[protein] + H2O = L-tyrosyl-[protein] + phosphate. It catalyses the reaction a phosphate monoester + H2O = an alcohol + phosphate. Functionally, acts on tyrosine phosphorylated proteins, low-MW aryl phosphates and natural and synthetic acyl phosphates. This Gallus gallus (Chicken) protein is Low molecular weight phosphotyrosine protein phosphatase (ACP1).